The following is a 178-amino-acid chain: Caveolin-1 (178 aa).

Ser2 carries the N-acetylserine modification. Ser2 bears the Phosphoserine mark. Residues Ser2–Val94 form a required for homooligomerization region. Over Ser2–Ser104 the chain is Cytoplasmic. Residue Lys5 is modified to N6-acetyllysine; alternate. Lys5 participates in a covalent cross-link: Glycyl lysine isopeptide (Lys-Gly) (interchain with G-Cter in ubiquitin); alternate. Tyr6 carries the phosphotyrosine modification. At Ser9 the chain carries Phosphoserine. Tyr14 bears the Phosphotyrosine; by ABL1 mark. Tyr25 is modified (phosphotyrosine). Glycyl lysine isopeptide (Lys-Gly) (interchain with G-Cter in ubiquitin) cross-links involve residues Lys26, Lys30, Lys39, Lys47, and Lys57. The tract at residues Asp82–Val94 is interaction with CAVIN3. The segment at residues Ala105 to Leu125 is an intramembrane region (helical). Over His126–Ile178 the chain is Cytoplasmic. Residues Val131–Gln142 form an interacts with SPRY1, SPRY2, SPRY3 and SPRY4 region. 3 S-palmitoyl cysteine lipidation sites follow: Cys133, Cys143, and Cys156. An interacts with SPRY1, SPRY2, and SPRY4 region spans residues Ser149 to Phe160. The segment at Phe167–Ile178 is interacts with SPRY1, SPRY2, SPRY3 and SPRY4.

Belongs to the caveolin family. In terms of assembly, homooligomer. Interacts with GLIPR2. Interacts with NOSTRIN. Interacts with SNAP25 and STX1A. Interacts (via the N-terminus) with DPP4; the interaction is direct. Interacts with CTNNB1, CDH1 and JUP. Interacts with PACSIN2; this interaction induces membrane tubulation. Interacts with SLC7A9. Interacts with BMX and BTK. Interacts with TGFBR1. Interacts with CAVIN3 (via leucine-zipper domain) in a cholesterol-sensitive manner. Interacts with CAVIN1. Interacts with EHD2 in a cholesterol-dependent manner. Forms a ternary complex with UBXN6 and VCP; mediates CAV1 targeting to lysosomes for degradation. Interacts with ABCG1; this interaction regulates ABCG1-mediated cholesterol efflux. Interacts with NEU3; this interaction enhances NEU3 sialidase activity within caveola. Interacts (via C-terminus) with SPRY1, SPRY2 (via C-terminus), SPRY3, and SPRY4. Interacts with IGFBP5; this interaction allows trafficking of IGFBP5 from the plasma membrane to the nucleus. Post-translationally, phosphorylated at Tyr-14 by ABL1 in response to oxidative stress. In terms of processing, ubiquitinated. Undergo monoubiquitination and multi- and/or polyubiquitination. Monoubiquitination of N-terminal lysines promotes integration in a ternary complex with UBXN6 and VCP which promotes oligomeric CAV1 targeting to lysosomes for degradation. Ubiquitinated by ZNRF1; leading to degradation and modulation of the TLR4-mediated immune response.

It localises to the golgi apparatus membrane. It is found in the cell membrane. Its subcellular location is the membrane. The protein localises to the caveola. The protein resides in the membrane raft. In terms of biological role, may act as a scaffolding protein within caveolar membranes. Forms a stable heterooligomeric complex with CAV2 that targets to lipid rafts and drives caveolae formation. Mediates the recruitment of CAVIN proteins (CAVIN1/2/3/4) to the caveolae. Interacts directly with G-protein alpha subunits and can functionally regulate their activity. Involved in the costimulatory signal essential for T-cell receptor (TCR)-mediated T-cell activation. Its binding to DPP4 induces T-cell proliferation and NF-kappa-B activation in a T-cell receptor/CD3-dependent manner. Recruits CTNNB1 to caveolar membranes and may regulate CTNNB1-mediated signaling through the Wnt pathway. Negatively regulates TGFB1-mediated activation of SMAD2/3 by mediating the internalization of TGFBR1 from membrane rafts leading to its subsequent degradation. Binds 20(S)-hydroxycholesterol (20(S)-OHC). The protein is Caveolin-1 (CAV1) of Mustela putorius furo (European domestic ferret).